The chain runs to 467 residues: Calcium-binding protein P (467 aa).

2 stretches are compositionally biased toward pro residues: residues 1 to 10 (MQNPQNPPPA) and 45 to 62 (QYPP…PPYP). Residues 1-311 (MQNPQNPPPA…GAYPGQPPMG (311 aa)) form a disordered region. The short motif at 45-49 (QYPPQ) is the XYPPX element. A compositionally biased stretch (low complexity) spans 63 to 74 (GTQQPGAPGAPG). Short sequence motifs (XYPPX) lie at residues 75 to 79 (QYPPQ), 83 to 87 (QYPPQ), 94 to 98 (QYPPQ), 104 to 108 (GYPPQ), 115 to 119 (QYPPQ), 125 to 129 (GYPPQ), 136 to 140 (QYPPQ), 146 to 150 (QYPPQ), 157 to 161 (QYPPQ), 165 to 169 (QYPPQ), 176 to 180 (AYPPQ), 187 to 191 (AYPPQ), 221 to 225 (GVPPQ), 238 to 242 (AYPPQ), 247 to 251 (AYPPQ), 256 to 260 (AYPPQ), and 275 to 279 (AYPPQ). Pro residues-rich tracts occupy residues 75 to 109 (QYPP…PPQQ) and 118 to 131 (PQQP…PQQP). Residues 132-145 (GAPGQYPPQQGQPG) show a composition bias toward low complexity. 2 stretches are compositionally biased toward low complexity: residues 153-193 (GQPG…PQQG) and 215-246 (AYPG…GQPG). Residues 253–311 (QPGAYPPQQQQVAYPGQQPPMGAYPPQQGAYPGQQGAYPGQQGAYPGQQGAYPGQPPMG) show a composition bias toward low complexity. EF-hand domains are found at residues 399–434 (QKMM…LGYY) and 435–467 (FSKG…WSMQ). Residues Asp-412, Asn-414, Ser-416, Thr-418, and Glu-423 each coordinate Ca(2+).

In Dictyostelium discoideum (Social amoeba), this protein is Calcium-binding protein P (cbpP).